The chain runs to 406 residues: Probable sodium/metabolite cotransporter BASS1, chloroplastic (406 aa).

The transit peptide at 1–64 directs the protein to the chloroplast; the sequence is MPLLRRPPAA…RHLCGIPSSR (64 aa). The next 9 helical transmembrane spans lie at 98–118, 123–143, 152–172, 187–209, 217–237, 252–272, 278–298, 315–335, and 376–396; these read VGEVLSLGFPVWVASACAVAL, AFLWVSPMAQIVGISFTMLGM, LKTALLMPKELASGFLLQYSV, PSYYAAGLILVSCCPGGTASNIV, VALSVLMTAASTFAAAFLTPL, MGLFVSTSQVVLAPVLLGALL, GLVQLVSPLMPFIAVATVAVL, LQVVMSVCWLHASGFFFGYVL, and VPCAVSSVCHSVYGSLLAGIW.

The protein belongs to the bile acid:sodium symporter (BASS) (TC 2.A.28) family.

It localises to the membrane. The protein resides in the plastid. Its subcellular location is the chloroplast envelope. Its function is as follows. May function as sodium-coupled metabolite transporter across the chloroplast envelope. The sequence is that of Probable sodium/metabolite cotransporter BASS1, chloroplastic (BASS1) from Oryza sativa subsp. japonica (Rice).